A 240-amino-acid polypeptide reads, in one-letter code: Purine nucleoside phosphorylase RC0672 (240 aa).

Histidine 60, cysteine 96, and histidine 113 together coordinate Zn(2+).

Belongs to the purine nucleoside phosphorylase YfiH/LACC1 family. As to quaternary structure, homodimer. It depends on Cu(2+) as a cofactor. The cofactor is Zn(2+).

The catalysed reaction is adenosine + phosphate = alpha-D-ribose 1-phosphate + adenine. It carries out the reaction S-methyl-5'-thioadenosine + phosphate = 5-(methylsulfanyl)-alpha-D-ribose 1-phosphate + adenine. It catalyses the reaction inosine + phosphate = alpha-D-ribose 1-phosphate + hypoxanthine. The enzyme catalyses adenosine + H2O + H(+) = inosine + NH4(+). Functionally, purine nucleoside enzyme that catalyzes the phosphorolysis of adenosine and inosine nucleosides, yielding D-ribose 1-phosphate and the respective free bases, adenine and hypoxanthine. Also catalyzes the phosphorolysis of S-methyl-5'-thioadenosine into adenine and S-methyl-5-thio-alpha-D-ribose 1-phosphate. Also has adenosine deaminase activity. This is Purine nucleoside phosphorylase RC0672 from Rickettsia conorii (strain ATCC VR-613 / Malish 7).